The sequence spans 1277 residues: NPC intracellular cholesterol transporter 1 (1277 aa).

The first 22 residues, 1–22, serve as a signal peptide directing secretion; the sequence is MGAHHPALGLLLLLLCPAQVFS. Over 23–269 the chain is Lumenal; sequence QSCVWYGECG…WRIWGLDAMY (247 aa). Intrachain disulfides connect cysteine 25/cysteine 74, cysteine 31/cysteine 42, cysteine 63/cysteine 109, cysteine 75/cysteine 113, cysteine 97/cysteine 238, cysteine 100/cysteine 160, cysteine 177/cysteine 184, cysteine 227/cysteine 243, and cysteine 240/cysteine 247. Residue asparagine 41 coordinates cholesterol. An N-linked (GlcNAc...) asparagine glycan is attached at asparagine 70. Glutamine 79 is a cholesterol binding site. 2 N-linked (GlcNAc...) asparagine glycosylation sites follow: asparagine 122 and asparagine 137. Residues 175-205 are important for cholesterol binding and cholesterol transfer from NPC1 to liposomes; it reads LLCGRDARACNATNWIEYMFNKDNGQAPFTI. N-linked (GlcNAc...) asparagine glycosylation is found at asparagine 185, asparagine 222, and asparagine 228. Residues 270 to 290 form a helical membrane-spanning segment; that stretch reads VIMWVTYVAFLFVFFGALLAV. Topologically, residues 291–350 are cytoplasmic; that stretch reads WCHRRRYFVSEYTPIDSNIAFSVNSSDKGEASCCDPLGAAFDDCLRRMFTKWGAFCVRNP. A helical transmembrane segment spans residues 351 to 371; sequence TCIIFFSLAFITVCSSGLVFV. The Lumenal segment spans residues 372 to 621; that stretch reads QVTTNPVELW…ELNRESNSDV (250 aa). Residues asparagine 414, asparagine 459, asparagine 478, and asparagine 524 are each glycosylated (N-linked (GlcNAc...) asparagine). Intrachain disulfides connect cysteine 468–cysteine 479 and cysteine 516–cysteine 533. The 166-residue stretch at 620-785 folds into the SSD domain; sequence DVFTVIISYV…ITCFVSLLGL (166 aa). Residues 622 to 642 traverse the membrane as a helical segment; the sequence is FTVIISYVVMFLYISLALGHI. Residues 643–653 lie on the Cytoplasmic side of the membrane; sequence QSCSRLLVDSK. The helical transmembrane segment at 654–674 threads the bilayer; it reads ISLGIAGILIVLSSVACSLGI. Topologically, residues 675–683 are lumenal; sequence FSYMGMPLT. The chain crosses the membrane as a helical span at residues 684 to 704; it reads LIVIEVIPFLVLAVGVDNIFI. Residues 705–730 lie on the Cytoplasmic side of the membrane; that stretch reads LVQTYQRDERLQEETLDQQLGRILGE. A helical membrane pass occupies residues 731-751; that stretch reads VAPTMFLSSFSETSAFFFGAL. The Lumenal portion of the chain corresponds to 752–759; it reads SSMPAVHT. Residues 760–780 traverse the membrane as a helical segment; it reads FSLFAGMAVLIDFLLQITCFV. The Cytoplasmic segment spans residues 781-832; sequence SLLGLDIKRQEKNHLDILCCVRGADDGQGSHASESYLFRFFKNYFAPLLLKD. The helical transmembrane segment at 833-853 threads the bilayer; it reads WLRPIVVAVFVGVLSFSVAVV. Residues 854 to 1097 are Lumenal-facing; the sequence is NKVDIGLDQS…EQYLTIIDDT (244 aa). N-linked (GlcNAc...) asparagine glycosylation is found at asparagine 868 and asparagine 898. Cysteine 909 and cysteine 914 are joined by a disulfide. Asparagine 916, asparagine 961, asparagine 968, and asparagine 1063 each carry an N-linked (GlcNAc...) asparagine glycan. 3 disulfide bridges follow: cysteine 956/cysteine 1011, cysteine 957/cysteine 979, and cysteine 967/cysteine 976. Residues 1098-1118 form a helical membrane-spanning segment; the sequence is IFNLSVSLGSIFLVTLVVLGC. Residues 1119–1123 are Cytoplasmic-facing; it reads ELWSA. A helical membrane pass occupies residues 1124–1144; it reads VIMCITIAMILVNMFGVMWLW. A topological domain (lumenal) is located at residue glycine 1145. The helical transmembrane segment at 1146 to 1166 threads the bilayer; that stretch reads ISLNAVSLVNLVMSCGISVEF. Topologically, residues 1167 to 1194 are cytoplasmic; it reads CSHITRAFTMSTKGSRVSRAEEALAHMG. Residues 1195–1215 traverse the membrane as a helical segment; that stretch reads SSVFSGITLTKFGGIVVLAFA. Over 1216–1226 the chain is Lumenal; it reads KSQIFEIFYFR. Residues 1227–1247 traverse the membrane as a helical segment; that stretch reads MYLAMVLLGATHGLIFLPVLL. The Cytoplasmic portion of the chain corresponds to 1248 to 1277; sequence SYIGPSVNKAKRHTTYERYRGTERERLLNF. The required for location in lysosomes stretch occupies residues 1274 to 1277; it reads LLNF. The Di-leucine motif motif lies at 1274–1277; that stretch reads LLNF.

Belongs to the patched family. As to quaternary structure, interacts (via the second lumenal domain) with NPC2. Interacts with TMEM97; the interaction may decrease NPC1 availability to the cell. Interacts with TIM1. Interacts with SLC38A9; this interaction inhibits cholesterol-mediated mTORC1 activation via its sterol transport activity. In terms of processing, N-glycosylated. Detected in liver (at protein level). Ubiquitous. Detected in adult heart, spleen, lung, liver, skeletal muscle, kidney, testis.

It localises to the late endosome membrane. The protein localises to the lysosome membrane. The catalysed reaction is cholesterol(in) = cholesterol(out). Functionally, intracellular cholesterol transporter which acts in concert with NPC2 and plays an important role in the egress of cholesterol from the endosomal/lysosomal compartment. Unesterified cholesterol that has been released from LDLs in the lumen of the late endosomes/lysosomes is transferred by NPC2 to the cholesterol-binding pocket in the N-terminal domain of NPC1. Cholesterol binds to NPC1 with the hydroxyl group buried in the binding pocket. May play a role in vesicular trafficking in glia, a process that may be crucial for maintaining the structural and functional integrity of nerve terminals. Inhibits cholesterol-mediated mTORC1 activation throught its interaction with SLC38A9. In Mus musculus (Mouse), this protein is NPC intracellular cholesterol transporter 1.